Reading from the N-terminus, the 643-residue chain is Probable potassium transport system protein Kup (643 aa).

The span at 1-12 shows a compositional bias: basic and acidic residues; the sequence is MSISSKTEDSDI. A disordered region spans residues 1–20; that stretch reads MSISSKTEDSDIRSSVMTDH. The next 12 helical transmembrane spans lie at 28-48, 65-85, 121-141, 158-178, 187-207, 224-244, 268-288, 301-321, 358-378, 384-404, 415-435, and 440-460; these read LAGLSLAALGVVFGDIGTSPL, AGNVLGVLSLLFWALVLIVGL, WLLVAIGLFGASLLYGDGMIT, PAFHEMVIPLTMLVLAGLFLF, GALFGPIILLWFIAIAILGII, GISFLLGNNLKGFTVLGAVFL, WFLLVLPALLLNYFGQGALLL, LVPSWAMIPMVLLATSATIIA, IYVPAANWSLMVGTIGIVAWF, LAAAYGVAVTATMLISTILFY, PAALNVMITFFAAIDLSFFGA, and LFHGAWVPLAVALVMFTIMNT.

It belongs to the HAK/KUP transporter (TC 2.A.72) family.

It is found in the cell inner membrane. The catalysed reaction is K(+)(in) + H(+)(in) = K(+)(out) + H(+)(out). Functionally, transport of potassium into the cell. Likely operates as a K(+):H(+) symporter. This is Probable potassium transport system protein Kup from Chlorobium luteolum (strain DSM 273 / BCRC 81028 / 2530) (Pelodictyon luteolum).